Here is a 257-residue protein sequence, read N- to C-terminus: THAP domain-containing protein 10 (257 aa).

The THAP-type zinc finger occupies 1 to 90 (MPARCVAAHC…LVAGAVPTLH (90 aa)). Residues 154–168 (QPHADNPSNTVTSVP) show a composition bias toward polar residues. The interval 154–178 (QPHADNPSNTVTSVPTHCEEGPVHK) is disordered.

This Homo sapiens (Human) protein is THAP domain-containing protein 10 (THAP10).